A 1003-amino-acid chain; its full sequence is Translation initiation factor IF-2 (1003 aa).

Composition is skewed to basic and acidic residues over residues 61 to 74 (EKFSQERQNKDRNK), 139 to 169 (PVVEKVVERKETPQPEKETPKPVVVEEKKPE), 180 to 206 (LEEKKEPKIEKTEEKTPQVKEMEKETP), 219 to 229 (VFKIRPTEFKS), and 252 to 290 (SKEEKRKEREEKDKQRQEQRKLMKDAIIKEIRKGDDKIS). Disordered stretches follow at residues 61-81 (EKFSQERQNKDRNKASISIEG) and 135-362 (PKAE…KDRF). The span at 315-350 (NAAGTTNAGGASNNNQRNDNANRPNRNNNSKPNGNN) shows a compositional bias: low complexity. Residues 502-672 (PRAPIVTVMG…LLEAEMLDLK (171 aa)) form the tr-type G domain. A G1 region spans residues 511–518 (GHVDHGKT). 511–518 (GHVDHGKT) is a binding site for GTP. Residues 536-540 (GITQH) are G2. Residues 558–561 (DTPG) are G3. GTP contacts are provided by residues 558–562 (DTPGH) and 612–615 (NKVD). Residues 612 to 615 (NKVD) form a G4 region. Residues 648 to 650 (SAK) form a G5 region.

It belongs to the TRAFAC class translation factor GTPase superfamily. Classic translation factor GTPase family. IF-2 subfamily.

The protein resides in the cytoplasm. Its function is as follows. One of the essential components for the initiation of protein synthesis. Protects formylmethionyl-tRNA from spontaneous hydrolysis and promotes its binding to the 30S ribosomal subunits. Also involved in the hydrolysis of GTP during the formation of the 70S ribosomal complex. The polypeptide is Translation initiation factor IF-2 (Phocaeicola vulgatus (strain ATCC 8482 / DSM 1447 / JCM 5826 / CCUG 4940 / NBRC 14291 / NCTC 11154) (Bacteroides vulgatus)).